A 193-amino-acid polypeptide reads, in one-letter code: Molybdenum cofactor guanylyltransferase (193 aa).

Residues 8 to 10 (LAG), lysine 21, aspartate 67, and aspartate 98 each bind GTP. Aspartate 98 is a Mg(2+) binding site.

It belongs to the MobA family. Monomer. The cofactor is Mg(2+).

Its subcellular location is the cytoplasm. The catalysed reaction is Mo-molybdopterin + GTP + H(+) = Mo-molybdopterin guanine dinucleotide + diphosphate. Transfers a GMP moiety from GTP to Mo-molybdopterin (Mo-MPT) cofactor (Moco or molybdenum cofactor) to form Mo-molybdopterin guanine dinucleotide (Mo-MGD) cofactor. In Cereibacter sphaeroides (strain ATCC 17029 / ATH 2.4.9) (Rhodobacter sphaeroides), this protein is Molybdenum cofactor guanylyltransferase.